Here is a 216-residue protein sequence, read N- to C-terminus: Nucleoid occlusion factor SlmA (216 aa).

A disordered region spans residues 1–23; it reads MAEQLTLDSIEPEPEKQSAKIEK. Residues 13–23 are compositionally biased toward basic and acidic residues; it reads EPEKQSAKIEK. An HTH tetR-type domain is found at 28–88; sequence ERRQQVLTVL…ALIENIESSL (61 aa). Positions 51 to 70 form a DNA-binding region, H-T-H motif; the sequence is TTARLAKEVGVSEAALYRYF.

The protein belongs to the nucleoid occlusion factor SlmA family. In terms of assembly, homodimer. Interacts with FtsZ.

It is found in the cytoplasm. It localises to the nucleoid. Required for nucleoid occlusion (NO) phenomenon, which prevents Z-ring formation and cell division over the nucleoid. Acts as a DNA-associated cell division inhibitor that binds simultaneously chromosomal DNA and FtsZ, and disrupts the assembly of FtsZ polymers. SlmA-DNA-binding sequences (SBS) are dispersed on non-Ter regions of the chromosome, preventing FtsZ polymerization at these regions. This is Nucleoid occlusion factor SlmA from Mannheimia succiniciproducens (strain KCTC 0769BP / MBEL55E).